Reading from the N-terminus, the 468-residue chain is Ribulose bisphosphate carboxylase large chain (468 aa).

N6,N6,N6-trimethyllysine is present on lysine 5. Substrate contacts are provided by asparagine 114 and threonine 164. The Proton acceptor role is filled by lysine 166. Lysine 168 serves as a coordination point for substrate. Mg(2+)-binding residues include lysine 192, aspartate 194, and glutamate 195. An N6-carboxylysine modification is found at lysine 192. Histidine 285 functions as the Proton acceptor in the catalytic mechanism. Arginine 286, histidine 318, and serine 370 together coordinate substrate.

This sequence belongs to the RuBisCO large chain family. Type I subfamily. As to quaternary structure, heterohexadecamer of 8 large chains and 8 small chains; disulfide-linked. The disulfide link is formed within the large subunit homodimers. Mg(2+) is required as a cofactor. Post-translationally, the disulfide bond which can form in the large chain dimeric partners within the hexadecamer appears to be associated with oxidative stress and protein turnover.

It is found in the plastid. Its subcellular location is the chloroplast. The catalysed reaction is 2 (2R)-3-phosphoglycerate + 2 H(+) = D-ribulose 1,5-bisphosphate + CO2 + H2O. The enzyme catalyses D-ribulose 1,5-bisphosphate + O2 = 2-phosphoglycolate + (2R)-3-phosphoglycerate + 2 H(+). In terms of biological role, ruBisCO catalyzes two reactions: the carboxylation of D-ribulose 1,5-bisphosphate, the primary event in carbon dioxide fixation, as well as the oxidative fragmentation of the pentose substrate in the photorespiration process. Both reactions occur simultaneously and in competition at the same active site. The chain is Ribulose bisphosphate carboxylase large chain from Nolana spathulata (Chilean bell flower).